Reading from the N-terminus, the 286-residue chain is Phosphoribosylaminoimidazole-succinocarboxamide synthase (286 aa).

This sequence belongs to the SAICAR synthetase family.

The enzyme catalyses 5-amino-1-(5-phospho-D-ribosyl)imidazole-4-carboxylate + L-aspartate + ATP = (2S)-2-[5-amino-1-(5-phospho-beta-D-ribosyl)imidazole-4-carboxamido]succinate + ADP + phosphate + 2 H(+). The protein operates within purine metabolism; IMP biosynthesis via de novo pathway; 5-amino-1-(5-phospho-D-ribosyl)imidazole-4-carboxamide from 5-amino-1-(5-phospho-D-ribosyl)imidazole-4-carboxylate: step 1/2. In Mannheimia succiniciproducens (strain KCTC 0769BP / MBEL55E), this protein is Phosphoribosylaminoimidazole-succinocarboxamide synthase.